A 319-amino-acid polypeptide reads, in one-letter code: MKPENKLPVLDLISAEMKTVVNTLQPDLPSWPATGTIAEQRQYYTLERRFWNAGAPEMATRAYMVPTKYGQVETRLFCPQPDSPATLFYLHGGGFILGNLDTHDRIMRLLASYSQCTVIGINYTLSPEARFPQAIEEIVAACCYFHQQAEDYQINMSRIGFAGDSAGAMLALASALWLRDKQIDCGKIAGVLLWYGLYGLRDSVTRRLLGGVWDGLTQQDLQMYEEAYLSNDADRESPYYCLFNNDLTREVPPCFIAGAEFDPLLDDSRLLYQTLAAHQQPCEFKLYPGTLHAFLHYSRMMKTADEALRDGAQFFTAQL.

The short motif at 91 to 93 is the Involved in the stabilization of the negatively charged intermediate by the formation of the oxyanion hole element; that stretch reads HGG. Catalysis depends on residues Ser-165, Asp-262, and His-292.

Belongs to the 'GDXG' lipolytic enzyme family. In terms of assembly, homodimer. Interacts with MalT and MelA.

Its subcellular location is the cytoplasm. In terms of biological role, displays esterase activity towards short chain fatty esters (acyl chain length of up to 8 carbons). Able to hydrolyze triacetylglycerol (triacetin) and tributyrylglycerol (tributyrin), but not trioleylglycerol (triolein) or cholesterol oleate. Negatively regulates MalT activity by antagonizing maltotriose binding. Inhibits MelA galactosidase activity. The sequence is that of Acetyl esterase from Shigella flexneri.